Consider the following 195-residue polypeptide: E3 ubiquitin-protein ligase ZNRF1 (195 aa).

Positions 1–10 (MGGKQSSASR) are enriched in polar residues. Disordered regions lie at residues 1-36 (MGGKQSSASRSRAPFPGVSSDDSAVPPSSNFGHFRA) and 61-84 (PFGLYRAGPDTERGGSSGSEDSRG). A lipid anchor (N-myristoyl glycine) is attached at Gly-2. Positions 18-29 (VSSDDSAVPPSS) are enriched in low complexity. The segment at 152–193 (CVICLEELSQGDTIARLPCLCIYHKSCIDSWFEVNRCCPEHP) adopts an RING-type; atypical zinc-finger fold.

It localises to the endosome. It is found in the lysosome. Its subcellular location is the membrane. It carries out the reaction S-ubiquitinyl-[E2 ubiquitin-conjugating enzyme]-L-cysteine + [acceptor protein]-L-lysine = [E2 ubiquitin-conjugating enzyme]-L-cysteine + N(6)-ubiquitinyl-[acceptor protein]-L-lysine.. The protein operates within protein modification; protein ubiquitination. In terms of biological role, E3 ubiquitin-protein ligase that plays a role in neuron cells differentiation. Plays a role in the establishment and maintenance of neuronal transmission and plasticity. The polypeptide is E3 ubiquitin-protein ligase ZNRF1 (znrf1) (Xenopus tropicalis (Western clawed frog)).